The following is a 269-amino-acid chain: Protein MrkE (269 aa).

The 115-residue stretch at 59-173 folds into the Response regulatory domain; that stretch reads KVIIVEDEFL…RIINMLQKLT (115 aa). The residue at position 110 (aspartate 110) is a 4-aspartylphosphate. The HTH LytTR-type domain maps to 197-269; sequence INLIKDERII…VAQVSIANRF (73 aa).

May be involved in the regulation of fimbrial expression. This chain is Protein MrkE (mrkE), found in Klebsiella pneumoniae.